The sequence spans 314 residues: Glutamyl-Q tRNA(Asp) synthetase (314 aa).

L-glutamate is bound by residues 14-18 (RFAPS) and E50. Positions 17–27 (PSPTGPLHVGS) match the 'HIGH' region motif. C106, C108, Y129, and C133 together coordinate Zn(2+). L-glutamate contacts are provided by Y187 and R205. Positions 243 to 247 (KLSKR) match the 'KMSKS' region motif. K246 is an ATP binding site.

The protein belongs to the class-I aminoacyl-tRNA synthetase family. GluQ subfamily. Requires Zn(2+) as cofactor.

In terms of biological role, catalyzes the tRNA-independent activation of glutamate in presence of ATP and the subsequent transfer of glutamate onto a tRNA(Asp). Glutamate is transferred on the 2-amino-5-(4,5-dihydroxy-2-cyclopenten-1-yl) moiety of the queuosine in the wobble position of the QUC anticodon. The chain is Glutamyl-Q tRNA(Asp) synthetase from Geobacter sulfurreducens (strain ATCC 51573 / DSM 12127 / PCA).